We begin with the raw amino-acid sequence, 115 residues long: Ribonuclease P protein component (115 aa).

It belongs to the RnpA family. Consists of a catalytic RNA component (M1 or rnpB) and a protein subunit.

The catalysed reaction is Endonucleolytic cleavage of RNA, removing 5'-extranucleotides from tRNA precursor.. Its function is as follows. RNaseP catalyzes the removal of the 5'-leader sequence from pre-tRNA to produce the mature 5'-terminus. It can also cleave other RNA substrates such as 4.5S RNA. The protein component plays an auxiliary but essential role in vivo by binding to the 5'-leader sequence and broadening the substrate specificity of the ribozyme. The polypeptide is Ribonuclease P protein component (Staphylococcus carnosus (strain TM300)).